We begin with the raw amino-acid sequence, 443 residues long: ATP-dependent protease ATPase subunit HslU (443 aa).

ATP is bound by residues Ile-18, 60 to 65 (GVGKTE), Asp-256, Glu-321, and Arg-393.

It belongs to the ClpX chaperone family. HslU subfamily. A double ring-shaped homohexamer of HslV is capped on each side by a ring-shaped HslU homohexamer. The assembly of the HslU/HslV complex is dependent on binding of ATP.

Its subcellular location is the cytoplasm. Its function is as follows. ATPase subunit of a proteasome-like degradation complex; this subunit has chaperone activity. The binding of ATP and its subsequent hydrolysis by HslU are essential for unfolding of protein substrates subsequently hydrolyzed by HslV. HslU recognizes the N-terminal part of its protein substrates and unfolds these before they are guided to HslV for hydrolysis. This Citrobacter koseri (strain ATCC BAA-895 / CDC 4225-83 / SGSC4696) protein is ATP-dependent protease ATPase subunit HslU.